We begin with the raw amino-acid sequence, 325 residues long: tRNA N(3)-methylcytidine methyltransferase Mettl2 (325 aa).

S-adenosyl-L-methionine contacts are provided by W96 and Y100. Positions 100, 112, 138, 140, 165, 191, and 212 each coordinate S-adenosyl-L-homocysteine. S-adenosyl-L-methionine contacts are provided by G140, D165, D191, and I212.

This sequence belongs to the methyltransferase superfamily. METL family. Interacts with Psn. As to expression, widely expressed. Expressed in ovaries, head, thorax and abdomen of adult flies, and in the CNS of third instar larvae. Isoform 2 is predominantly expressed in larvae and in adult tissues that have been tested.

Its function is as follows. Probable methyltransferase. This Drosophila melanogaster (Fruit fly) protein is tRNA N(3)-methylcytidine methyltransferase Mettl2.